The primary structure comprises 488 residues: Thiamine transporter 2 (488 aa).

Residues 1-8 (MDSSCRTP) are Cytoplasmic-facing. A helical membrane pass occupies residues 9–29 (PSNSWVYPTVILCLFGFFSMF). Residues 30 to 54 (RPSEAFLIPFLSEPSKNLTSPEMTN) are Extracellular-facing. Asn-46 carries N-linked (GlcNAc...) asparagine glycosylation. A helical membrane pass occupies residues 55 to 75 (EILPVWTYSYLATLPPVFVLT). Topologically, residues 76–82 (DYLRYKP) are cytoplasmic. A helical membrane pass occupies residues 83–103 (VIMLHVVAFATSYLFLLFGQG). At 104–111 (VMLMQTAE) the chain is on the extracellular side. The helical transmembrane segment at 112 to 132 (FFFGVVSATEIAYFAYIYSMV) threads the bilayer. The Cytoplasmic segment spans residues 133 to 145 (SPEHYQKVSSYCR). Residues 146–166 (SITLVAYTAGSVLAQLLVSLT) traverse the membrane as a helical segment. The Extracellular segment spans residues 167-172 (NLPYSS). A helical membrane pass occupies residues 173–193 (LFYISLACVSVAFFFSLFLPM). The Cytoplasmic portion of the chain corresponds to 194 to 276 (PKKSMFFHAK…YSSKHLVYWS (83 aa)). Residues 277–297 (LWWAFATAGYNQILNYVQVLW) traverse the membrane as a helical segment. Topologically, residues 298-310 (EHKAPSQDSSIYN) are extracellular. The chain crosses the membrane as a helical span at residues 311-331 (GAVEAIATFGGALASFSVGYL). At 332 to 335 (KVNW) the chain is on the cytoplasmic side. A helical membrane pass occupies residues 336 to 356 (DLLGELGLAVFSAVIAGSLFL). Topologically, residues 357-369 (MNYSRSIWVCYAG) are extracellular. The N-linked (GlcNAc...) asparagine glycan is linked to Asn-358. Residues 370–390 (YLLVKSSYSFLITIAVFQIAV) traverse the membrane as a helical segment. Topologically, residues 391-399 (NLSLERYAL) are cytoplasmic. Residues 400-420 (VFGIDTFIALVIQTIMTMIVV) traverse the membrane as a helical segment. Topologically, residues 421–428 (DQRGLQLP) are extracellular. A helical membrane pass occupies residues 429–449 (VTTQFLVYGSYFAVIAGVFLM). The Cytoplasmic segment spans residues 450-488 (RSIYILCSAKCRKEVQNLATTRSPNEPHPQEPSNVSTKF). Positions 469-488 (TTRSPNEPHPQEPSNVSTKF) are disordered.

Belongs to the reduced folate carrier (RFC) transporter (TC 2.A.48) family. As to expression, high expression in kidney, brain, lung and small intestine. Detected in pancreatic acinar cells (at protein level). Also expressed strongly in pancreatic islet cells.

It localises to the membrane. It carries out the reaction thiamine(out) + H(+)(in) = thiamine(in) + H(+)(out). High-affinity transporter for the intake of thiamine. Unlike the human ortholog, lacks H(+)-dependent pyridoxine transport activity due to an absence of seven critical amino-acids required for pyridoxine transport. This is Thiamine transporter 2 (Slc19a3) from Mus musculus (Mouse).